Reading from the N-terminus, the 97-residue chain is Essential MCU regulator, mitochondrial (97 aa).

Residues 1–37 constitute a mitochondrion transit peptide; it reads MAARMGVLSVAGFRAAARAGGLLARPKQSTAVVPCRT. Over 38-55 the chain is Mitochondrial matrix; sequence VIASSAGAILPKPEKVSF. A helical transmembrane segment spans residues 56–75; sequence GLLRVFTVVIPFLYIGTLIS. Topologically, residues 76 to 97 are mitochondrial intermembrane; the sequence is KNFAAVLEEHDIFVPEDDDDDD.

This sequence belongs to the SMDT1/EMRE family. Component of the uniplex complex.

The protein resides in the mitochondrion inner membrane. Its function is as follows. Essential regulatory subunit of the mitochondrial calcium uniporter complex (uniplex), a complex that mediates calcium uptake into mitochondria. Required to bridge the calcium-sensing proteins micu1 with the calcium-conducting subunit mcu. Acts by mediating activation of mcu and retention of micu1 to the mcu pore, in order to ensure tight regulation of the uniplex complex and appropriate responses to intracellular calcium signaling. The sequence is that of Essential MCU regulator, mitochondrial from Xenopus laevis (African clawed frog).